Consider the following 129-residue polypeptide: Probable protein cornichon homolog 2 (129 aa).

2 helical membrane-spanning segments follow: residues Phe45 to Leu65 and Leu105 to Asp125.

This sequence belongs to the cornichon family.

Its subcellular location is the membrane. This Arabidopsis thaliana (Mouse-ear cress) protein is Probable protein cornichon homolog 2.